A 107-amino-acid polypeptide reads, in one-letter code: Integration host factor subunit beta (107 aa).

The span at 82-101 (PGKELRERVDRRAGEPLKAE) shows a compositional bias: basic and acidic residues. A disordered region spans residues 82–107 (PGKELRERVDRRAGEPLKAEDPDDDL).

It belongs to the bacterial histone-like protein family. As to quaternary structure, heterodimer of an alpha and a beta chain.

This protein is one of the two subunits of integration host factor, a specific DNA-binding protein that functions in genetic recombination as well as in transcriptional and translational control. The polypeptide is Integration host factor subunit beta (Paraburkholderia xenovorans (strain LB400)).